Consider the following 267-residue polypeptide: Kallikrein-14 (267 aa).

A signal peptide spans 1-34 (MSLRVLGSGTWPSAPKMFLLLTALQVLAIAMTQS). The propeptide at 35–40 (QEDENK) is activation peptide. A Peptidase S1 domain is found at 41–265 (IIGGHTCTRS…YRSWIEETMR (225 aa)). Disulfide bonds link cysteine 47/cysteine 180, cysteine 68/cysteine 84, cysteine 159/cysteine 226, cysteine 191/cysteine 205, and cysteine 216/cysteine 241. Active-site charge relay system residues include histidine 83 and aspartate 127. Serine 220 (charge relay system) is an active-site residue.

This sequence belongs to the peptidase S1 family. Kallikrein subfamily. In terms of processing, proteolytic cleavage of the activation peptide produces the active enzyme. As to expression, highly expressed in CNS, bone marrow and fetal liver. Also expressed in breast, thyroid, kidney, colon, pancreas, spleen, prostate, uterus, small intestine, placenta and skeletal muscle. Among 40 tissues tested, the highest expression is detected in skin followed by breast and prostate (at protein level). Expressed in stratum corneum by sweat ducts and sweat glands and detected in sweat (at protein level).

It is found in the secreted. The protein resides in the extracellular space. With respect to regulation, inhibited by SERPINA1, SERPINC1, SERPINE1, SERPINF2, aprotinin, soybean, trypsin inhibitor and leupeptin. Inhibited by serine protease inhibitor SPINK5. Has an autoproteolytic activity which may have a regulatory effect. Activated by citrate and inhibited by zinc and to a lower extent by manganese. Functionally, serine-type endopeptidase with a dual trypsin-like and chymotrypsin-like substrate specificity. May activate/inactivate the proteinase-activated receptors F2R, F2RL1 and F2RL3 and other kallikreins including KLK1, KLK3, KLK5 and KLK11. May function in seminal clot liquefaction through direct cleavage of the semenogelin SEMG1 and SEMG2 and activation of KLK3. May function through desmoglein DSG1 cleavage in epidermal desquamation a process by which the most superficial corneocytes are shed from the skin surface. May be involved in several aspects of tumor progression including growth, invasion and angiogenesis. In Homo sapiens (Human), this protein is Kallikrein-14 (KLK14).